The primary structure comprises 150 residues: MQVILLEKVINLGSLGDIVRVKDGYARNFLIPTKRARRATQSAIAEFEVKRAELEKVAAEKLAAAQAEGEKLNGLTVQITQKSGVDGRLFGSVTNADIAEALAGQGFKLEKAQVRMPSGPLKVVGDHPVSVALHTDVVVDVTVAVLGEHV.

Belongs to the bacterial ribosomal protein bL9 family.

Functionally, binds to the 23S rRNA. The protein is Large ribosomal subunit protein bL9 of Cupriavidus metallidurans (strain ATCC 43123 / DSM 2839 / NBRC 102507 / CH34) (Ralstonia metallidurans).